A 357-amino-acid chain; its full sequence is Glutamine synthetase root isozyme A (357 aa).

The 81-residue stretch at 19–99 (IIAEYIWVGG…VICDVYTPAG (81 aa)) folds into the GS beta-grasp domain. The region spanning 106 to 357 (KRYNAAKIFS…AETTILWKKP (252 aa)) is the GS catalytic domain.

It belongs to the glutamine synthetase family. Homooctamer.

It localises to the cytoplasm. The enzyme catalyses L-glutamate + NH4(+) + ATP = L-glutamine + ADP + phosphate + H(+). This is Glutamine synthetase root isozyme A (GS3A) from Pisum sativum (Garden pea).